The following is a 173-amino-acid chain: Co-chaperone protein HscB (173 aa).

A J domain is found at 2-74 (DYFTLFGLPA…LKRAEYMLSL (73 aa)).

This sequence belongs to the HscB family. Interacts with HscA and stimulates its ATPase activity. Interacts with IscU.

Co-chaperone involved in the maturation of iron-sulfur cluster-containing proteins. Seems to help targeting proteins to be folded toward HscA. The chain is Co-chaperone protein HscB from Photorhabdus laumondii subsp. laumondii (strain DSM 15139 / CIP 105565 / TT01) (Photorhabdus luminescens subsp. laumondii).